The chain runs to 463 residues: UDP-N-acetylmuramoylalanine--D-glutamate ligase (463 aa).

Position 126–132 (126–132 (GSNGKST)) interacts with ATP.

It belongs to the MurCDEF family.

It is found in the cytoplasm. The catalysed reaction is UDP-N-acetyl-alpha-D-muramoyl-L-alanine + D-glutamate + ATP = UDP-N-acetyl-alpha-D-muramoyl-L-alanyl-D-glutamate + ADP + phosphate + H(+). It participates in cell wall biogenesis; peptidoglycan biosynthesis. Its function is as follows. Cell wall formation. Catalyzes the addition of glutamate to the nucleotide precursor UDP-N-acetylmuramoyl-L-alanine (UMA). The polypeptide is UDP-N-acetylmuramoylalanine--D-glutamate ligase (Idiomarina loihiensis (strain ATCC BAA-735 / DSM 15497 / L2-TR)).